The primary structure comprises 586 residues: MAPYLQTSLIWIAYAVAVGLALFAAIVTTFTWQKPRERSAVVNTVAVVSLTSLLATVLLLPVDIALVSSTGSVHLGVNKEWATPEHVAGMLRTLQIVYYSLYSLDALLCLIVIPFAYFWYEEYDEVEEEEGTRSTGAKLWGAFKYTSGFIILVLILFFVGFFVPAAGNQKGGHLDLDYFKRLLAANKGEKALTFAVGLLVCLGTLLYVLYTSSGLALLPISFIKSAPSISAPQLSETTASALERNRERQRQLELRNGGNHDEMPSKDRRELESLVREERTLVRRARLAAEAQGEGRSWVYRTWTKICAVFRPLKLVGGILLLLVSVIVWVSMLITTIDKASNSLCKGHCGYILGQIKIFQPVNWLFLQAAKAFPVDYIIMAFLVLFFFSSSISGLATVGIRFLWVQIFQIRRGRTAPQAILIATVMMALIILGINYSIAMMAAPQYSIYGTQTFCTAEPTAHGKQPDCSEHPEMVRPCSEGFKQPLAKDICTPSVMSTFLNRVTLNWPVFGAVDFWAQVAFLAVFLIVLVTSLFRTPKLNMSELDEEAEADEEEGLLASTGRRFGATWQDITGRSGQASNQENGDN.

A run of 9 helical transmembrane segments spans residues 10–30 (IWIAYAVAVGLALFAAIVTTF), 47–67 (VVSLTSLLATVLLLPVDIALV), 96–116 (IVYYSLYSLDALLCLIVIPFA), 147–167 (SGFIILVLILFFVGFFVPAAG), 191–211 (ALTFAVGLLVCLGTLLYVLYT), 315–335 (LVGGILLLLVSVIVWVSMLIT), 378–398 (IIMAFLVLFFFSSSISGLATV), 420–440 (ILIATVMMALIILGINYSIAM), and 509–529 (VFGAVDFWAQVAFLAVFLIVL). N540 carries an N-linked (GlcNAc...) asparagine glycan.

Belongs to the LIMR family. LMBRD1 subfamily.

Its subcellular location is the lysosome membrane. Functionally, probable lysosomal cobalamin transporter. Required to export cobalamin from lysosomes allowing its conversion to cofactors. The chain is Probable lysosomal cobalamin transporter from Pyricularia oryzae (strain 70-15 / ATCC MYA-4617 / FGSC 8958) (Rice blast fungus).